Here is a 673-residue protein sequence, read N- to C-terminus: UvrABC system protein B (673 aa).

Residues 26–414 (EGLEDGLAHQ…GDEVVDQVVR (389 aa)) enclose the Helicase ATP-binding domain. 39–46 (GVTGSGKT) lines the ATP pocket. Positions 92–115 (YYDYYQPEAYVPSSDTFIEKDASV) match the Beta-hairpin motif. In terms of domain architecture, Helicase C-terminal spans 431-597 (QVDDLLSEIR…GLNKKVVDIL (167 aa)). Residues 633 to 668 (QQKIHELEEQMMQHAQNLEFEEAAQIRDQLHQLREL) form the UVR domain.

It belongs to the UvrB family. As to quaternary structure, forms a heterotetramer with UvrA during the search for lesions. Interacts with UvrC in an incision complex.

It is found in the cytoplasm. Its function is as follows. The UvrABC repair system catalyzes the recognition and processing of DNA lesions. A damage recognition complex composed of 2 UvrA and 2 UvrB subunits scans DNA for abnormalities. Upon binding of the UvrA(2)B(2) complex to a putative damaged site, the DNA wraps around one UvrB monomer. DNA wrap is dependent on ATP binding by UvrB and probably causes local melting of the DNA helix, facilitating insertion of UvrB beta-hairpin between the DNA strands. Then UvrB probes one DNA strand for the presence of a lesion. If a lesion is found the UvrA subunits dissociate and the UvrB-DNA preincision complex is formed. This complex is subsequently bound by UvrC and the second UvrB is released. If no lesion is found, the DNA wraps around the other UvrB subunit that will check the other stand for damage. The sequence is that of UvrABC system protein B from Salmonella typhi.